The chain runs to 29 residues: Cytochrome b6-f complex subunit 8 (29 aa).

A helical membrane pass occupies residues 3–23; it reads ILSISWAFLMVVFTFSLSLVV.

This sequence belongs to the PetN family. In terms of assembly, the 4 large subunits of the cytochrome b6-f complex are cytochrome b6, subunit IV (17 kDa polypeptide, PetD), cytochrome f and the Rieske protein, while the 4 small subunits are PetG, PetL, PetM and PetN. The complex functions as a dimer.

The protein localises to the plastid. Its subcellular location is the chloroplast thylakoid membrane. Component of the cytochrome b6-f complex, which mediates electron transfer between photosystem II (PSII) and photosystem I (PSI), cyclic electron flow around PSI, and state transitions. The polypeptide is Cytochrome b6-f complex subunit 8 (Chara vulgaris (Common stonewort)).